A 661-amino-acid polypeptide reads, in one-letter code: Junctophilin-1 (661 aa).

Residues 1–639 (MTGGRFDFDD…EKEANSGPNS (639 aa)) are Cytoplasmic-facing. MORN repeat units follow at residues 14–36 (YCGGWEEGKAHGHGICTGPKGQG), 38–59 (YSGSWSHGFEVVGGYTWPSGNT), 60–82 (YQGYWAQGKRHGLGVETKGKWMY), 106–128 (YEGTWSNGLQDGYGVETYGDGGT), and 129–151 (YQGQWAGGMRHGYGVRQSVPYGM). Phosphoserine occurs at positions 157, 216, and 220. The disordered stretch occupies residues 228–247 (SKSSISSKRSSVRSDAAMSR). 2 MORN repeats span residues 281-303 (YMGEWKNDKRNGFGVSERSNGMK) and 304-326 (YEGEWANNKRHGYGCTVFPDGSK). A compositionally biased stretch (basic and acidic residues) spans 433–454 (DAKENPEEKVPEKPPTPKESPH). The interval 433 to 631 (DAKENPEEKV…SNDSCPALEK (199 aa)) is disordered. T448 is modified (phosphothreonine). S452 is subject to Phosphoserine. Residue T461 is modified to Phosphothreonine. Phosphoserine is present on residues S465, S469, and S475. The span at 599-613 (VAKESKAEPKAKKSE) shows a compositional bias: basic and acidic residues. The helical; Anchor for type IV membrane protein transmembrane segment at 640 to 660 (IMIVLVMLLNIGLAILFVHFL) threads the bilayer.

It belongs to the junctophilin family. Abundantly expressed in skeletal muscle. Very low levels in heart.

It is found in the cell membrane. Its subcellular location is the endoplasmic reticulum membrane. It localises to the sarcoplasmic reticulum membrane. Junctophilins contribute to the formation of junctional membrane complexes (JMCs) which link the plasma membrane with the endoplasmic or sarcoplasmic reticulum in excitable cells. Provides a structural foundation for functional cross-talk between the cell surface and intracellular calcium release channels. JPH1 contributes to the construction of the skeletal muscle triad by linking the t-tubule (transverse-tubule) and SR (sarcoplasmic reticulum) membranes. The chain is Junctophilin-1 (JPH1) from Homo sapiens (Human).